We begin with the raw amino-acid sequence, 278 residues long: uncharacterized protein (278 aa).

The N-terminal stretch at 1-20 is a signal peptide; sequence MSPLIVGTLIIILLSGLATA. A lipid anchor (GPI-anchor amidated glycine) is attached at Gly96. A propeptide spans 97 to 278 (removed in mature form); that stretch reads TFLTSPTAKR…QLIMQTFNGS (182 aa).

The protein resides in the cell membrane. This is an uncharacterized protein from Schizosaccharomyces pombe (strain 972 / ATCC 24843) (Fission yeast).